We begin with the raw amino-acid sequence, 254 residues long: Phosphate import ATP-binding protein PstB 2 (254 aa).

In terms of domain architecture, ABC transporter spans phenylalanine 9 to valine 249. An ATP-binding site is contributed by glycine 41–serine 48.

This sequence belongs to the ABC transporter superfamily. Phosphate importer (TC 3.A.1.7) family. The complex is composed of two ATP-binding proteins (PstB), two transmembrane proteins (PstC and PstA) and a solute-binding protein (PstS).

It localises to the cell inner membrane. The enzyme catalyses phosphate(out) + ATP + H2O = ADP + 2 phosphate(in) + H(+). Its function is as follows. Part of the ABC transporter complex PstSACB involved in phosphate import. Responsible for energy coupling to the transport system. In Photobacterium profundum (strain SS9), this protein is Phosphate import ATP-binding protein PstB 2.